The chain runs to 384 residues: F-box only protein 5-B (384 aa).

Disordered stretches follow at residues methionine 1–alanine 20 and aspartate 79–serine 106. The span at proline 9–serine 19 shows a compositional bias: low complexity. A compositionally biased stretch (polar residues) spans serine 83–proline 99. Positions alanine 191–tyrosine 238 constitute an F-box domain. The segment at serine 311–serine 359 adopts a ZBR-type zinc-finger fold. 8 residues coordinate Zn(2+): cysteine 315, cysteine 318, cysteine 333, cysteine 338, cysteine 343, cysteine 346, histidine 351, and cysteine 356.

Part of a SCF (SKP1-cullin-F-box) protein ligase complex. Interacts with btrc. Interacts with skp1. Interacts with cdc20. Interacts with pin1; stabilizes fbxo5 by preventing its association with btrc in an isomerization-dependent pathway; this interaction is present during G2 phase and prevents fbxo5 degradation. Interacts with plk1. In terms of processing, proteolysed; proteolysis is induced by both cyclin B-cdk1 and cyclin A-cdk1/2 complex through probable phosphorylation. Proteolysis is inhibited by pin1 during G2.

It localises to the nucleus. The protein localises to the cytoplasm. The protein resides in the cytoskeleton. It is found in the spindle. Its subcellular location is the microtubule organizing center. It localises to the centrosome. It participates in protein modification; protein ubiquitination. In terms of biological role, regulates progression through early mitosis by inhibiting the anaphase promoting complex/cyclosome (APC). Binds to the APC activators cdc20 to prevent APC activation. Can also bind directly to the APC to inhibit substrate-binding. Required to arrest unfertilized eggs at metaphase of meiosis II, by preventing their release from metaphase of meiosis II, through inhibition of APC-dependent cyclin B destruction leading to stabilization of cyclin B-cdk1 complex activity. The polypeptide is F-box only protein 5-B (fbxo5-b) (Xenopus laevis (African clawed frog)).